We begin with the raw amino-acid sequence, 173 residues long: Ribulose bisphosphate carboxylase small subunit, chloroplastic 7 (173 aa).

Residues 1–49 constitute a chloroplast transit peptide; it reads MASIPATVATVAQANMVAPFTGLKSNAAFPVTKKVNDFSTLASNGGRVQ.

Belongs to the RuBisCO small chain family. As to quaternary structure, heterohexadecamer of 8 large and 8 small subunits.

Its subcellular location is the plastid. It localises to the chloroplast. Its function is as follows. RuBisCO catalyzes two reactions: the carboxylation of D-ribulose 1,5-bisphosphate, the primary event in carbon dioxide fixation, as well as the oxidative fragmentation of the pentose substrate. Both reactions occur simultaneously and in competition at the same active site. Although the small subunit is not catalytic it is essential for maximal activity. This Flaveria pringlei protein is Ribulose bisphosphate carboxylase small subunit, chloroplastic 7.